Here is an 861-residue protein sequence, read N- to C-terminus: Interleukin-12 receptor subunit beta-2 (861 aa).

The first 23 residues, 1-23, serve as a signal peptide directing secretion; the sequence is MARTVCGCSWALIFIIMSLLVKA. The Extracellular portion of the chain corresponds to 24 to 622; that stretch reads KIDVCKRGDV…REFCLQGKAN (599 aa). 4 N-linked (GlcNAc...) asparagine glycosylation sites follow: Asn-48, Asn-129, Asn-166, and Asn-271. 5 Fibronectin type-III domains span residues 126-224, 226-317, 318-415, 423-520, and 521-620; these read QPQN…VVRP, PPWD…TQTP, EKEP…NIAD, APQQ…KHKA, and PLSG…LQGK. The WSXWS motif motif lies at 305–309; sequence WSDWS. N-linked (GlcNAc...) asparagine glycosylation is found at Asn-347, Asn-376, and Asn-480. The helical transmembrane segment at 623–643 threads the bilayer; the sequence is WSTFVAPSICIAVITVGVFSM. The Cytoplasmic segment spans residues 644 to 861; that stretch reads RCFRQKVFVL…LKMGCGSLML (218 aa). Positions 662–670 match the Box 1 motif motif; the sequence is CSREIPDPA. Residues 718–761 form a disordered region; the sequence is FRRPHHPNWPGKGQRLQGRHASEEDTGSSASSPPPPRALTAETG. Tyr-800 carries the phosphotyrosine modification.

It belongs to the type I cytokine receptor family. Type 2 subfamily. Heterodimer/heterooligomer; disulfide-linked. The functional high affinity IL12 receptor is composed of I12RB1 and IL12RB2. Il12RB2 binds JAK2 (via its N-terminal) through a membrane-proximal region of the cytoplasmic domain. On IL12 stimulation, phosphorylated on C-terminal tyrosine residues.

Its subcellular location is the membrane. Functionally, receptor for interleukin-12. This subunit is the signaling component coupling to the JAK2/STAT4 pathway. This is Interleukin-12 receptor subunit beta-2 (IL12RB2) from Sus scrofa (Pig).